A 528-amino-acid polypeptide reads, in one-letter code: Oxamate amidohydrolase proenzyme (528 aa).

Catalysis depends on T342, which acts as the Nucleophile. Substrate is bound at residue 424 to 425; the sequence is GG.

It belongs to the gamma-glutamyltransferase family. In terms of assembly, heterodimer that consists of a 35.5 kDa large (alpha) subunit and a 20 kDa small (beta) subunit, which are synthesized from a single polypeptide. Post-translationally, cleaved by autocatalysis into a large (alpha) and a small (beta) subunit.

The enzyme catalyses oxamate + H2O = oxalate + NH4(+). Involved in the uric acid degradation pathway. Catalyzes the conversion of oxamate to oxalate. The polypeptide is Oxamate amidohydrolase proenzyme (Klebsiella pneumoniae subsp. pneumoniae (strain ATCC 700721 / MGH 78578)).